Reading from the N-terminus, the 153-residue chain is NAD(P)H-quinone oxidoreductase subunit N (153 aa).

This sequence belongs to the complex I NdhN subunit family. As to quaternary structure, NDH-1 can be composed of about 15 different subunits; different subcomplexes with different compositions have been identified which probably have different functions.

The protein resides in the cellular thylakoid membrane. The catalysed reaction is a plastoquinone + NADH + (n+1) H(+)(in) = a plastoquinol + NAD(+) + n H(+)(out). It carries out the reaction a plastoquinone + NADPH + (n+1) H(+)(in) = a plastoquinol + NADP(+) + n H(+)(out). In terms of biological role, NDH-1 shuttles electrons from an unknown electron donor, via FMN and iron-sulfur (Fe-S) centers, to quinones in the respiratory and/or the photosynthetic chain. The immediate electron acceptor for the enzyme in this species is believed to be plastoquinone. Couples the redox reaction to proton translocation, and thus conserves the redox energy in a proton gradient. Cyanobacterial NDH-1 also plays a role in inorganic carbon-concentration. This is NAD(P)H-quinone oxidoreductase subunit N from Synechococcus sp. (strain RCC307).